The following is a 207-amino-acid chain: Sodium/potassium-transporting ATPase subunit beta-1-interacting protein 1 (207 aa).

3 consecutive transmembrane segments (helical) span residues 2 to 22 (GKCS…VAAL), 35 to 55 (APIL…FGTV), and 62 to 82 (LILY…IICF). Asn100 is a glycosylation site (N-linked (GlcNAc...) asparagine). Residues 147 to 167 (ALSSALQIFLALFGFVFACYV) form a helical membrane-spanning segment.

The protein belongs to the NKAIN family. In terms of assembly, interacts with ATP1B1 C-terminus. As to expression, detected in the brain only and specifically in neurons. Expressed in multiple regions such as cerebral cortex, thalamus, hippocampus, olfactory bulb and brainstem as well as in cerebellum with high expression in granular cell layer.

Its subcellular location is the cell membrane. In Mus musculus (Mouse), this protein is Sodium/potassium-transporting ATPase subunit beta-1-interacting protein 1 (Nkain1).